We begin with the raw amino-acid sequence, 134 residues long: Phosphomevalonate dehydratase small subunit (134 aa).

Ser-62 serves as the catalytic Proton acceptor.

Belongs to the AcnX type II small subunit family. As to quaternary structure, heterodimer composed of a large subunit (PMDh-L) and a small subunit (PMDh-S).

The enzyme catalyses (R)-5-phosphomevalonate = (2E)-3-methyl-5-phosphooxypent-2-enoate + H2O. It participates in isoprenoid biosynthesis; isopentenyl diphosphate biosynthesis via mevalonate pathway. Component of a hydro-lyase that catalyzes the dehydration of mevalonate 5-phosphate (MVA5P) to form trans-anhydromevalonate 5-phosphate (tAHMP). Involved in the archaeal mevalonate (MVA) pathway, which provides fundamental precursors for isoprenoid biosynthesis, such as isopentenyl diphosphate (IPP) and dimethylallyl diphosphate (DMAPP). This Pyrococcus horikoshii (strain ATCC 700860 / DSM 12428 / JCM 9974 / NBRC 100139 / OT-3) protein is Phosphomevalonate dehydratase small subunit.